The following is a 911-amino-acid chain: Inter-alpha-trypsin inhibitor heavy chain H1 (911 aa).

A signal peptide spans 1–27; that stretch reads MDGAMGPRGLLLCMYLVSLLILQAMPA. A propeptide spanning residues 28–34 is cleaved from the precursor; that stretch reads LGSATGR. Residues 37–166 form the VIT domain; that stretch reads SSEKRQAVDT…KVTFQLTYEE (130 aa). Residue Cys-60 is glycosylated (S-linked (Hex...) cysteine). Ser-129 carries the post-translational modification Phosphoserine. Residues 181–184 carry the Phagocytosis uptake signal motif; that stretch reads VKPK. 2 disulfide bridges follow: Cys-244–Cys-247 and Cys-268–Cys-540. Asn-285 carries an N-linked (GlcNAc...) (complex) asparagine glycan. The VWFA domain occupies 290–450; the sequence is NKNVVFVIDI…FNFLEVMSME (161 aa). Positions 387 to 911 are hyaluronan-binding; it reads SLPELSNHAS…YTDYIVPDIF (525 aa). Phosphothreonine occurs at positions 402 and 407. Asn-588 carries an N-linked (GlcNAc...) (complex) asparagine glycan. Thr-653 carries O-linked (GalNAc...) threonine glycosylation. Aspartate 1-(chondroitin 4-sulfate)-ester is present on Asp-672. Positions 673 to 911 are excised as a propeptide; sequence PHFIIHVPQK…YTDYIVPDIF (239 aa). Asn-750 is a glycosylation site (N-linked (GlcNAc...) asparagine).

The protein belongs to the ITIH family. As to quaternary structure, I-alpha-I plasma protease inhibitors are assembled from one or two heavy chains (HC) and one light chain, bikunin. Inter-alpha-inhibitor (I-alpha-I) is composed of ITIH1/HC1, ITIH2/HC2 and bikunin. Interacts with TNFAIP6 (via Link and CUB domains). In terms of processing, heavy chains are linked to bikunin via chondroitin 4-sulfate esterified to the alpha-carboxyl of the C-terminal aspartate after propeptide cleavage. The S-linked glycan is composed of two 6-carbon sugars, possibly Glc or Gal.

It is found in the secreted. May act as a carrier of hyaluronan in serum or as a binding protein between hyaluronan and other matrix protein, including those on cell surfaces in tissues to regulate the localization, synthesis and degradation of hyaluronan which are essential to cells undergoing biological processes. In terms of biological role, contains a potential peptide which could stimulate a broad spectrum of phagocytotic cells. The sequence is that of Inter-alpha-trypsin inhibitor heavy chain H1 (ITIH1) from Homo sapiens (Human).